Consider the following 444-residue polypeptide: tRNA (guanine-N(7)-)-methyltransferase non-catalytic subunit TRM82 (444 aa).

7 WD repeats span residues 1 to 47, 48 to 99, 100 to 147, 148 to 192, 193 to 237, 238 to 279, and 308 to 354; these read MSVI…WSDD, FDKI…LGAP, PIYS…KRFC, FSKR…EPIL, GHVS…DKWL, FGHK…STFD, and FAVS…ITFP. The tract at residues 55–92 is disordered; that stretch reads RNTTAKEQQGQSSENENENKKLKSNKGDSIKRTAAKVP. Positions 71 to 85 are enriched in basic and acidic residues; sequence NENKKLKSNKGDSIK. Ser-93 carries the phosphoserine modification.

Belongs to the WD repeat TRM82 family. Forms a heterodimer with the catalytic subunit TRM8.

The protein resides in the nucleus. The protein operates within tRNA modification; N(7)-methylguanine-tRNA biosynthesis. Functionally, required for the formation of N(7)-methylguanine at position 46 (m7G46) in tRNA, a modification required to maintain stability of tRNAs; its absence resulting in tRNA decay. In the complex, it is required to stabilize and induce conformational changes of the catalytic subunit. The sequence is that of tRNA (guanine-N(7)-)-methyltransferase non-catalytic subunit TRM82 from Saccharomyces cerevisiae (strain RM11-1a) (Baker's yeast).